We begin with the raw amino-acid sequence, 335 residues long: Aliphatic sulfonates import ATP-binding protein SsuB (335 aa).

Residues 48–71 (PFASGGAFGRAPRDDDDDRRGAGD) form a disordered region. One can recognise an ABC transporter domain in the interval 74–293 (VRLTRVSKRY…ARASAAFAEL (220 aa)). 106–113 (GRSGCGKS) lines the ATP pocket.

This sequence belongs to the ABC transporter superfamily. Aliphatic sulfonates importer (TC 3.A.1.17.2) family. In terms of assembly, the complex is composed of two ATP-binding proteins (SsuB), two transmembrane proteins (SsuC) and a solute-binding protein (SsuA).

It localises to the cell inner membrane. It carries out the reaction ATP + H2O + aliphatic sulfonate-[sulfonate-binding protein]Side 1 = ADP + phosphate + aliphatic sulfonateSide 2 + [sulfonate-binding protein]Side 1.. Part of the ABC transporter complex SsuABC involved in aliphatic sulfonates import. Responsible for energy coupling to the transport system. The chain is Aliphatic sulfonates import ATP-binding protein SsuB from Burkholderia thailandensis (strain ATCC 700388 / DSM 13276 / CCUG 48851 / CIP 106301 / E264).